We begin with the raw amino-acid sequence, 505 residues long: MELSYQALRVASQNREAEELRTEARRKNLLILIMHYLLQEGYVDSANSLEQETKISSRRFEVCDNVDLETILMEYESYYYIKFQKYPKITKKALDHDSRVQPKPRSAGKLRRAGSNSTQGLPRIGQQQVIHRPVSSSYYRTNGHQKALSRENSKQESGGNSPQEASEVGLNVSAISKASGEGSHTRRRQVIDFRSMIQDTIKGASQEIALNSLNCNPDPSERLIKPVGAFIGGNSEMRELAAVISRDIYLQNPNVRWDDIIGLDAAKRLVKEAVVYPIRYPQLFTGILSPWKGLLLYGPPGTGKTLLAKAVATECNTTFFNISASTIVSKWRGDSEKLVRVLFELARYHAPSTIFLDELESVMSQRGTGPGELDYAMLRRLEKRILVDLPSKEARQAMIQHWLPPISNSSGVELRMDLDYSTLGEETDGYSGSDIRLVCKEAAMRPVRKIFDALENHHSEHKKLPVISLETVTTSDFSEVLAHTKPSAKSLAEKYSAWQNEFESV.

The LisH domain occupies 25–57 (RRKNLLILIMHYLLQEGYVDSANSLEQETKISS). Disordered regions lie at residues 94 to 127 (LDHD…IGQQ) and 140 to 167 (RTNG…EASE). Composition is skewed to polar residues over residues 114–127 (GSNS…IGQQ) and 155–164 (QESGGNSPQE). 298–305 (GPPGTGKT) lines the ATP pocket.

It belongs to the AAA ATPase family. Katanin p60 subunit A1 subfamily. A-like 2 sub-subfamily.

The protein localises to the cytoplasm. It localises to the cytoskeleton. Its subcellular location is the spindle. The protein resides in the spindle pole. It carries out the reaction n ATP + n H2O + a microtubule = n ADP + n phosphate + (n+1) alpha/beta tubulin heterodimers.. Severs microtubules in vitro in an ATP-dependent manner. This activity may promote rapid reorganization of cellular microtubule arrays. This Xenopus laevis (African clawed frog) protein is Katanin p60 ATPase-containing subunit A-like 2 (katnal2).